A 616-amino-acid polypeptide reads, in one-letter code: Bifunctional 2-aminoethylphosphonate cytidylyltransferase/aminotransferase (616 aa).

Residues 1-240 are 2-aminoethylphosphonate cytidylyltransferase; sequence MIKQAVILAG…VKNIYPHIVE (240 aa). The CMP-(2-aminoethyl)phosphonate site is built by L8, G10, G11, K25, T83, T88, E104, and S105. Residues D106 and D136 each coordinate Mg(2+). CMP-(2-aminoethyl)phosphonate-binding residues include D136, K153, and E196. Residues E220 and D222 each contribute to the Mg(2+) site. The tract at residues 250–616 is 2-aminoethylphosphonate aminotransferase; the sequence is EVLLNPGPAT…EYMNGIGVGV (367 aa). Residues S313, G314, T315, T390, K441, and T490 each coordinate pyridoxal 5'-phosphate.

In the N-terminal section; belongs to the LicC/PntC cytidylyltransferase family. It in the C-terminal section; belongs to the class-V pyridoxal-phosphate-dependent aminotransferase family. PhnW subfamily. As to quaternary structure, homodimer. It depends on Mg(2+) as a cofactor. Zn(2+) is required as a cofactor. Requires pyridoxal 5'-phosphate as cofactor.

The enzyme catalyses (2-aminoethyl)phosphonate + CTP = CMP-(2-aminoethyl)phosphonate + diphosphate. It carries out the reaction (2-aminoethyl)phosphonate + pyruvate = phosphonoacetaldehyde + L-alanine. The protein operates within phosphorus metabolism; phosphonate biosynthesis. Its activity is regulated as follows. Cytidylyltransferase activity is inhibited in the presence of EDTA and is restored by the addition of Mg(2+) or Zn(2+). In terms of biological role, bifunctional transferase involved in the biosynthesis of cell-surface phosphonates. The aminotransferase region catalyzes the transformation of phosphonoacetaldehyde (PnAA) to 2-aminoethylphosphonate (AEP). The cytidylyltransferase region catalyzes the activation of 2-aminoethylphosphonate (AEP) to CMP-2-aminoethylphosphonate (CMP-AEP). Cannot use phosphocholine. Exhibits strong activity towards CTP, limited activity towards ATP and no activity with GTP. The chain is Bifunctional 2-aminoethylphosphonate cytidylyltransferase/aminotransferase from Treponema denticola (strain ATCC 35405 / DSM 14222 / CIP 103919 / JCM 8153 / KCTC 15104).